Here is a 251-residue protein sequence, read N- to C-terminus: NADPH-dependent oxidoreductase (251 aa).

Belongs to the flavin oxidoreductase frp family. FMN serves as cofactor.

Its function is as follows. Reduces FMN, organic nitro compounds and disulfide DTNB. Involved in maintenance of the cellular redox state and the disulfide stress response. The chain is NADPH-dependent oxidoreductase (nfrA) from Staphylococcus aureus (strain USA300).